A 257-amino-acid polypeptide reads, in one-letter code: Phosphate import ATP-binding protein PstB (257 aa).

Positions 11 to 252 (IQVRDLNFYY…PAKKQTEDYI (242 aa)) constitute an ABC transporter domain. Position 43–50 (43–50 (GPSGSGKS)) interacts with ATP.

It belongs to the ABC transporter superfamily. Phosphate importer (TC 3.A.1.7) family. The complex is composed of two ATP-binding proteins (PstB), two transmembrane proteins (PstC and PstA) and a solute-binding protein (PstS).

The protein resides in the cell inner membrane. The catalysed reaction is phosphate(out) + ATP + H2O = ADP + 2 phosphate(in) + H(+). Its function is as follows. Part of the ABC transporter complex PstSACB involved in phosphate import. Responsible for energy coupling to the transport system. In Salmonella choleraesuis (strain SC-B67), this protein is Phosphate import ATP-binding protein PstB.